The following is a 1026-amino-acid chain: Glutactin (1026 aa).

A signal peptide spans methionine 1 to alanine 17. Sulfotyrosine occurs at positions 26 and 29. Asparagine 115 carries an N-linked (GlcNAc...) asparagine glycan. Cysteine 123 and cysteine 145 are disulfide-bonded. Tyrosine 182 carries the post-translational modification Sulfotyrosine. Cysteines 298 and 316 form a disulfide. Residues asparagine 368 and asparagine 402 are each glycosylated (N-linked (GlcNAc...) asparagine). Sulfotyrosine is present on tyrosine 559. The interval proline 601–alanine 641 is disordered. A compositionally biased stretch (low complexity) spans threonine 603 to threonine 615. Positions alanine 625–proline 636 are enriched in polar residues. Position 645 is a sulfotyrosine (tyrosine 645). 2 disordered regions span residues glutamate 659 to glutamate 695 and glutamate 723 to asparagine 1026. A compositionally biased stretch (basic and acidic residues) spans glutamate 723–glutamine 752. Tyrosine 727 carries the post-translational modification Sulfotyrosine. N-linked (GlcNAc...) asparagine glycosylation occurs at asparagine 810. Residues phenylalanine 811 to glutamine 854 show a composition bias toward basic and acidic residues. Sulfotyrosine occurs at positions 836, 862, 865, 868, 922, and 928. Residues glutamine 855–glutamate 866 are compositionally biased toward low complexity. Over residues glutamate 867–glutamine 893 the composition is skewed to basic and acidic residues. The segment covering aspartate 923 to glutamine 944 has biased composition (basic and acidic residues). Positions glutamate 945–glutamate 969 are enriched in acidic residues. Sulfotyrosine occurs at positions 981, 984, and 1006. Over residues glutamate 1002–asparagine 1026 the composition is skewed to basic and acidic residues.

The protein in the N-terminal section; belongs to the type-B carboxylesterase/lipase family. Post-translationally, extensively O-glycosylated and also N-glycosylated. In terms of processing, about four tyrosines are sulfated.

The protein resides in the secreted. The protein localises to the extracellular space. It is found in the extracellular matrix. Its subcellular location is the basement membrane. In terms of biological role, not known. Binds calcium ions. This Drosophila melanogaster (Fruit fly) protein is Glutactin (Glt).